The sequence spans 209 residues: Small ribosomal subunit protein uS4 (209 aa).

One can recognise an S4 RNA-binding domain in the interval 98-164 (RRLDNVVYRL…LPIKNAIELN (67 aa)).

It belongs to the universal ribosomal protein uS4 family. Part of the 30S ribosomal subunit. Contacts protein S5. The interaction surface between S4 and S5 is involved in control of translational fidelity.

Its function is as follows. One of the primary rRNA binding proteins, it binds directly to 16S rRNA where it nucleates assembly of the body of the 30S subunit. In terms of biological role, with S5 and S12 plays an important role in translational accuracy. This Thermosipho melanesiensis (strain DSM 12029 / CIP 104789 / BI429) protein is Small ribosomal subunit protein uS4.